The chain runs to 225 residues: Deoxyribose-phosphate aldolase (225 aa).

The active-site Proton donor/acceptor is the D94. K158 acts as the Schiff-base intermediate with acetaldehyde in catalysis. K187 functions as the Proton donor/acceptor in the catalytic mechanism.

Belongs to the DeoC/FbaB aldolase family. DeoC type 1 subfamily.

Its subcellular location is the cytoplasm. It carries out the reaction 2-deoxy-D-ribose 5-phosphate = D-glyceraldehyde 3-phosphate + acetaldehyde. It participates in carbohydrate degradation; 2-deoxy-D-ribose 1-phosphate degradation; D-glyceraldehyde 3-phosphate and acetaldehyde from 2-deoxy-alpha-D-ribose 1-phosphate: step 2/2. Its function is as follows. Catalyzes a reversible aldol reaction between acetaldehyde and D-glyceraldehyde 3-phosphate to generate 2-deoxy-D-ribose 5-phosphate. The chain is Deoxyribose-phosphate aldolase from Thermococcus gammatolerans (strain DSM 15229 / JCM 11827 / EJ3).